The following is a 415-amino-acid chain: Dynein assembly factor with WD repeat domains 1 (415 aa).

WD repeat units lie at residues 90–129, 132–174, 175–214, 217–256, 259–298, 301–340, 343–384, and 386–415; these read AHILPLTNVALNKAGSCFITGSYDRTCKVWDTASGEELHT, GHRN…HTFR, GHTAEIVCLSFNPQSTVVATGSMDTTAKLWDIQSGEEVVT, GHLAEIISLSFDTSGDRIITGSFDHTVVVWDASTGRKVHT, GHCAEISSALFSWDCSLILTGSMDKTCMLWDATSGKCVAT, GHDDEILDSCFDYTGKLIATASADGTARVYNATTRKCITK, GHEG…QVLE, and HTDEIFSCAFNYKGNIVITGSKDNSCRIWR.

Belongs to the WD repeat WDR69 family. In terms of assembly, interacts with IFT46.

The protein localises to the cytoplasm. The protein resides in the cytoskeleton. It is found in the flagellum basal body. Its subcellular location is the flagellum axoneme. Required for axonemal dynein assembly and ciliary motility in ciliated organs, including Kupffer's vesicle, during embryogenesis. Facilitates the onset of robust cilia motility during development. The sequence is that of Dynein assembly factor with WD repeat domains 1 (Daw1) from Rattus norvegicus (Rat).